The following is a 582-amino-acid chain: Protein bps2 (582 aa).

An ATP-binding site is contributed by alanine 28 to threonine 35. Residues arginine 243–isoleucine 281 are a coiled coil. A Zinc-hook domain is found at arginine 243–serine 351. Positions 292 and 295 each coordinate Zn(2+). The stretch at serine 320–serine 351 forms a coiled coil.

The protein is Protein bps2 (bps2) of Acidianus ambivalens (Desulfurolobus ambivalens).